A 376-amino-acid polypeptide reads, in one-letter code: Multicilin (376 aa).

The stretch at Glu-165–Leu-213 forms a coiled coil. The disordered stretch occupies residues Glu-230–Ser-261. Positions Thr-331–Asn-376 are TIRT domain.

This sequence belongs to the geminin family. Component of the EDM complex, at least composed of e2f4, e2f5, mcidas and tfdp1.

The protein localises to the nucleus. Its function is as follows. Transcription regulator specifically required for multiciliate cell differentiation. Acts in a multiprotein complex containing e2f4 and e2f5 that binds and activate genes required for centriole biogenesis. Activates genes required for centriole assembly (plk4, cep152) and genes specifically required for motile cilia formation (foxj1). Also promotes the deuterosome pathway of centriole biogenesis by activating expression of deup1, but not its paralog cep63. The polypeptide is Multicilin (mcidas) (Xenopus tropicalis (Western clawed frog)).